Here is a 159-residue protein sequence, read N- to C-terminus: Allergen Arg r 1 (159 aa).

Residues 1–16 (MALIILLVACLSVVSA) form the signal peptide. Disulfide bonds link Cys-50–Cys-155 and Cys-109–Cys-134.

The protein belongs to the calycin superfamily. Histamine-binding salivary protein family. Post-translationally, not glycosylated.

The protein localises to the secreted. The sequence is that of Allergen Arg r 1 from Argas reflexus (European pigeon tick).